The primary structure comprises 365 residues: A-type ATP synthase subunit C (365 aa).

The protein belongs to the V-ATPase V0D/AC39 subunit family. Has multiple subunits with at least A(3), B(3), C, D, E, F, H, I and proteolipid K(x).

It localises to the cell membrane. Its function is as follows. Component of the A-type ATP synthase that produces ATP from ADP in the presence of a proton gradient across the membrane. This chain is A-type ATP synthase subunit C, found in Thermococcus kodakarensis (strain ATCC BAA-918 / JCM 12380 / KOD1) (Pyrococcus kodakaraensis (strain KOD1)).